A 196-amino-acid chain; its full sequence is uncharacterized protein (196 aa).

This is an uncharacterized protein from Methanocaldococcus jannaschii (strain ATCC 43067 / DSM 2661 / JAL-1 / JCM 10045 / NBRC 100440) (Methanococcus jannaschii).